A 674-amino-acid chain; its full sequence is Phosphopantothenoylcysteine decarboxylase subunit VHS3 (674 aa).

Disordered stretches follow at residues 1 to 164, 190 to 230, 348 to 368, 384 to 426, and 575 to 674; these read MTNK…SILS, LNSD…RPSV, QHNS…NITG, TSSN…SNVV, and VSAG…LQRS. Over residues 15–81 the composition is skewed to polar residues; that stretch reads ASNTLSGAEQ…TSGAVVSNTP (67 aa). The residue at position 90 (Thr90) is a Phosphothreonine. Over residues 106 to 116 the composition is skewed to polar residues; that stretch reads EQTPPNQVARQ. A compositionally biased stretch (basic and acidic residues) spans 137–150; the sequence is NLKDINTKVPKDGE. Residues 152-164 show a composition bias toward polar residues; the sequence is SASSFSTPTSILS. Residues 198–212 show a composition bias toward basic and acidic residues; the sequence is SPRKEHPHFYVEDPL. Residues 214-230 show a composition bias toward low complexity; sequence TPSVRSRSNSTSPRPSV. The span at 351 to 368 shows a compositional bias: polar residues; the sequence is SIDTSFNSTNSNAGNITG. Residues 384-395 show a composition bias toward low complexity; it reads TSSNSAASQTNN. Positions 403–426 are enriched in polar residues; sequence MASTTGFPSTLGGSRTYSNSSNVV. Residues 580–591 are compositionally biased toward acidic residues; it reads EEEEDEDNDEED. Over residues 592 to 602 the composition is skewed to basic and acidic residues; sequence DNKKNDTGGKD. Positions 603–660 are enriched in acidic residues; sequence EDNDDDDDDDDDDDDDDDDDDDDDDDDDDDDDDDDDDDDDDDDDDDDDEDDEDEDEDD. The segment covering 661–674 has biased composition (basic and acidic residues); sequence EGKKKEDKGGLQRS.

Belongs to the HFCD (homooligomeric flavin containing Cys decarboxylase) superfamily. Interacts with the C-terminal domain of PPZ1. Component of the phosphopantothenoylcysteine decarboxylase (PPCDC) complex, a heterotrimer composed of CAB3, SIS2 and VHS3.

Functionally, component of the phosphopantothenoylcysteine decarboxylase (PPCDC) involved in the coenzyme A synthesis. Acts as an inhibitory subunit of protein phosphatase PPZ1, which is involved in many cellular processes such as G1-S transition or salt tolerance. The protein is Phosphopantothenoylcysteine decarboxylase subunit VHS3 (VHS3) of Saccharomyces cerevisiae (strain ATCC 204508 / S288c) (Baker's yeast).